Consider the following 288-residue polypeptide: Sulfur carrier protein FdhD (288 aa).

Residue Cys122 is the Cysteine persulfide intermediate of the active site. Residue Phe268 to Arg273 participates in Mo-bis(molybdopterin guanine dinucleotide) binding.

The protein belongs to the FdhD family.

It is found in the cytoplasm. Its function is as follows. Required for formate dehydrogenase (FDH) activity. Acts as a sulfur carrier protein that transfers sulfur from IscS to the molybdenum cofactor prior to its insertion into FDH. The polypeptide is Sulfur carrier protein FdhD (Anaeromyxobacter dehalogenans (strain 2CP-1 / ATCC BAA-258)).